Here is a 346-residue protein sequence, read N- to C-terminus: Endosome-associated-trafficking regulator 1 (346 aa).

Positions 46 to 67 (FVSSNSKRAFSKDSNQSTTQFR) are enriched in polar residues. Disordered stretches follow at residues 46 to 77 (FVSSNSKRAFSKDSNQSTTQFRGPSECPDGNL), 93 to 129 (LQEDEDDDWSGSYHPSVIENTHGPKVPSPAGTDGDES), and 153 to 173 (SPPAGLHGKTQHRPDSTSDSE). Residues 170-317 (SDSEEGLRLL…SGAQSSIKQL (148 aa)) are a coiled coil.

Belongs to the ENTR1 family.

It is found in the cytoplasm. It localises to the early endosome. The protein resides in the endosome. Its subcellular location is the recycling endosome. The protein localises to the midbody. It is found in the cytoskeleton. It localises to the microtubule organizing center. The protein resides in the centrosome. Its subcellular location is the cilium basal body. In terms of biological role, endosome-associated protein that plays a role in membrane receptor sorting, cytokinesis and ciliogenesis. The protein is Endosome-associated-trafficking regulator 1 of Xenopus tropicalis (Western clawed frog).